A 786-amino-acid polypeptide reads, in one-letter code: Polyribonucleotide nucleotidyltransferase (786 aa).

Asp-516 and Asp-522 together coordinate Mg(2+). A KH domain is found at 582–641 (PRVTTVKIPVDKIGMVIGPKGQTINAIQDETGAEISIEDDGTIYVGATNGPSAQAAVERV). The S1 motif domain maps to 653–722 (GDRFLGTVVK…QRGKIYLDKV (70 aa)). The disordered stretch occupies residues 722-786 (VRPEGAEGPA…SRPRRRTRHS (65 aa)). A compositionally biased stretch (low complexity) spans 727–738 (AEGPAEAAATDR). The segment covering 739–778 (PAGRDRGDRAPRDRGDRGDRERGSRGPDRGDGGEGGGESR) has biased composition (basic and acidic residues).

This sequence belongs to the polyribonucleotide nucleotidyltransferase family. Requires Mg(2+) as cofactor.

The protein resides in the cytoplasm. It carries out the reaction RNA(n+1) + phosphate = RNA(n) + a ribonucleoside 5'-diphosphate. In terms of biological role, involved in mRNA degradation. Catalyzes the phosphorolysis of single-stranded polyribonucleotides processively in the 3'- to 5'-direction. The chain is Polyribonucleotide nucleotidyltransferase from Salinispora arenicola (strain CNS-205).